The following is a 77-amino-acid chain: NADH dehydrogenase [ubiquinone] 1 alpha subcomplex subunit 3 (77 aa).

Residues 23 to 45 (IVGGSALALAGIVMATIGVANYY) traverse the membrane as a helical segment.

It belongs to the complex I NDUFA3 subunit family. Complex I is composed of 43 different subunits.

The protein resides in the mitochondrion inner membrane. The protein localises to the cytoplasm. It localises to the myofibril. Its subcellular location is the sarcomere. It is found in the z line. Functionally, accessory subunit of the mitochondrial membrane respiratory chain NADH dehydrogenase (Complex I), that is believed not to be involved in catalysis. Complex I functions in the transfer of electrons from NADH to the respiratory chain. The immediate electron acceptor for the enzyme is believed to be ubiquinone. Required for the maintenance of muscle integrity and for cell proliferation in the wing imaginal disc epithelium, possibly by interacting with the chaperone-assisted selective autophagy (CASA) pathway. The polypeptide is NADH dehydrogenase [ubiquinone] 1 alpha subcomplex subunit 3 (Drosophila melanogaster (Fruit fly)).